Consider the following 206-residue polypeptide: Octanoyltransferase (206 aa).

The 177-residue stretch at 30–206 (PETNDEIWLV…EFVTLLNNSI (177 aa)) folds into the BPL/LPL catalytic domain. Substrate is bound by residues 69-76 (RGGQVTYH), 137-139 (SLG), and 150-152 (GIA). The Acyl-thioester intermediate role is filled by Cys-168.

The protein belongs to the LipB family.

The protein localises to the cytoplasm. The enzyme catalyses octanoyl-[ACP] + L-lysyl-[protein] = N(6)-octanoyl-L-lysyl-[protein] + holo-[ACP] + H(+). It participates in protein modification; protein lipoylation via endogenous pathway; protein N(6)-(lipoyl)lysine from octanoyl-[acyl-carrier-protein]: step 1/2. In terms of biological role, catalyzes the transfer of endogenously produced octanoic acid from octanoyl-acyl-carrier-protein onto the lipoyl domains of lipoate-dependent enzymes. Lipoyl-ACP can also act as a substrate although octanoyl-ACP is likely to be the physiological substrate. The chain is Octanoyltransferase from Francisella tularensis subsp. tularensis (strain FSC 198).